The sequence spans 266 residues: PDZ domain-containing protein 9 (266 aa).

In terms of domain architecture, PDZ spans 27-109 (KVIQTKLTVG…GTVLQIKAYR (83 aa)).

In Mus musculus (Mouse), this protein is PDZ domain-containing protein 9 (Pdzd9).